We begin with the raw amino-acid sequence, 1372 residues long: DNA-directed RNA polymerase subunit beta (1372 aa).

This sequence belongs to the RNA polymerase beta chain family. The RNAP catalytic core consists of 2 alpha, 1 beta, 1 beta' and 1 omega subunit. When a sigma factor is associated with the core the holoenzyme is formed, which can initiate transcription.

It catalyses the reaction RNA(n) + a ribonucleoside 5'-triphosphate = RNA(n+1) + diphosphate. Its function is as follows. DNA-dependent RNA polymerase catalyzes the transcription of DNA into RNA using the four ribonucleoside triphosphates as substrates. This is DNA-directed RNA polymerase subunit beta from Rickettsia bellii (strain RML369-C).